The sequence spans 433 residues: L-2-hydroxyglutarate dehydrogenase, mitochondrial (433 aa).

This sequence belongs to the L2HGDH family. FAD serves as cofactor.

Its subcellular location is the mitochondrion. It catalyses the reaction (S)-2-hydroxyglutarate + A = 2-oxoglutarate + AH2. This chain is L-2-hydroxyglutarate dehydrogenase, mitochondrial, found in Caenorhabditis elegans.